Here is a 288-residue protein sequence, read N- to C-terminus: 4-diphosphocytidyl-2-C-methyl-D-erythritol kinase (288 aa).

The active site involves K13. 96 to 106 (PIGGGIGGGSS) contacts ATP. The active site involves D138.

The protein belongs to the GHMP kinase family. IspE subfamily.

The enzyme catalyses 4-CDP-2-C-methyl-D-erythritol + ATP = 4-CDP-2-C-methyl-D-erythritol 2-phosphate + ADP + H(+). It participates in isoprenoid biosynthesis; isopentenyl diphosphate biosynthesis via DXP pathway; isopentenyl diphosphate from 1-deoxy-D-xylulose 5-phosphate: step 3/6. In terms of biological role, catalyzes the phosphorylation of the position 2 hydroxy group of 4-diphosphocytidyl-2C-methyl-D-erythritol. The sequence is that of 4-diphosphocytidyl-2-C-methyl-D-erythritol kinase from Aliivibrio salmonicida (strain LFI1238) (Vibrio salmonicida (strain LFI1238)).